Here is a 339-residue protein sequence, read N- to C-terminus: Phenylalanine--tRNA ligase alpha subunit (339 aa).

Glutamate 254 is a binding site for Mg(2+).

It belongs to the class-II aminoacyl-tRNA synthetase family. Phe-tRNA synthetase alpha subunit type 1 subfamily. Tetramer of two alpha and two beta subunits. Requires Mg(2+) as cofactor.

It localises to the cytoplasm. The enzyme catalyses tRNA(Phe) + L-phenylalanine + ATP = L-phenylalanyl-tRNA(Phe) + AMP + diphosphate + H(+). This chain is Phenylalanine--tRNA ligase alpha subunit, found in Clostridium botulinum (strain Langeland / NCTC 10281 / Type F).